The chain runs to 798 residues: Integrin beta-5 (798 aa).

Residues 1–23 (MPRVPATLYACLLGLCALVPRLA) form the signal peptide. Topologically, residues 24 to 719 (GLNICTSGSA…REPECGSAPN (696 aa)) are extracellular. Residues 27 to 76 (ICTSGSATSCEECLLIHPKCAWCSKEYFGNPRSITSRCDLKANLIRNGCE) form the PSI domain. 19 cysteine pairs are disulfide-bonded: Cys28-Cys46, Cys36-Cys463, Cys39-Cys64, Cys49-Cys75, Cys202-Cys211, Cys259-Cys300, Cys401-Cys413, Cys433-Cys461, Cys465-Cys484, Cys476-Cys487, Cys489-Cys498, Cys500-Cys530, Cys513-Cys528, Cys522-Cys533, Cys535-Cys548, Cys550-Cys571, Cys555-Cys569, Cys563-Cys574, and Cys576-Cys585. Residues 136–378 (YPVDLYYLMD…QLIINAYSSI (243 aa)) form the VWFA domain. Positions 147 and 149 each coordinate Mg(2+). Residues Ser149, Asp152, Asp153, and Asp184 each contribute to the Ca(2+) site. The Ca(2+) site is built by Asn242, Asp244, Pro246, and Glu247. Glu247 provides a ligand contact to Mg(2+). Asn347 carries an N-linked (GlcNAc...) asparagine glycan. Gly362 contacts Ca(2+). N-linked (GlcNAc...) asparagine glycosylation is found at Asn460 and Asn479. I-EGF domains lie at 465–499 (CSTGLEPNSARCSGNGTYTCGLCECDPGYLGTRCE), 500–549 (CQEG…PFCE), 550–586 (CDSFSCARNKGVLCSGHGECHCGECKCHAGYIGDNCN), and 587–626 (CSTDVSTCKAKDGQICSDRGRCVCGQCQCTEPGAFGETCE). Residue Asn505 is glycosylated (N-linked (GlcNAc...) asparagine). N-linked (GlcNAc...) asparagine glycosylation is present at Asn586. Intrachain disulfides connect Cys587/Cys610, Cys594/Cys608, Cys602/Cys613, Cys615/Cys625, Cys628/Cys631, Cys635/Cys682, Cys641/Cys661, Cys644/Cys657, and Cys690/Cys714. N-linked (GlcNAc...) asparagine glycosylation is found at Asn654 and Asn705. The chain crosses the membrane as a helical span at residues 720–742 (AMTILLAVVGSILLIGMALLAIW). Over 743-798 (KLLVTIHDRREFAKFQSERSRARYEMASNPLYRKPISTHTVDFAFNKFNKSYNGSV) the chain is Cytoplasmic. Phosphoserine is present on Ser770.

Belongs to the integrin beta chain family. In terms of assembly, heterodimer of an alpha and a beta subunit. Beta-5 (ITGB5) associates with alpha-V (ITGAV). Interacts with MYO10. Interacts with DAB2. Integrin ITGAV:ITGB5 interacts with FBLN5 (via N-terminus). ITGAV:ITGB5 interacts with CCN3. Interacts with tensin TNS3; TNS3 also interacts with PEAK1, thus acting as an adapter molecule to bridge the association of PEAK1 with ITGB5.

It is found in the cell membrane. Integrin alpha-V/beta-5 (ITGAV:ITGB5) is a receptor for fibronectin. It recognizes the sequence R-G-D in its ligand. This chain is Integrin beta-5 (Itgb5), found in Mus musculus (Mouse).